Here is a 183-residue protein sequence, read N- to C-terminus: UPF0397 protein VFMJ11_1662 (183 aa).

The next 5 helical transmembrane spans lie at 8 to 28 (VVVIAIGAALYGIGGLPMFGI), 41 to 61 (AVLALFSVLYGPIVGFLVGFI), 75 to 95 (WLTWVLGSGIVGMIIGLFPII), 110 to 130 (FLIFVVLAFFGNVFGYGTSAF), and 147 to 167 (LCIIAAGNTFLIAIVGYFILN).

This sequence belongs to the UPF0397 family.

It is found in the cell membrane. The sequence is that of UPF0397 protein VFMJ11_1662 from Aliivibrio fischeri (strain MJ11) (Vibrio fischeri).